Here is a 143-residue protein sequence, read N- to C-terminus: Transcriptional regulator MraZ (143 aa).

2 consecutive SpoVT-AbrB domains span residues 5-47 (EFRH…PMNE) and 76-119 (ASEC…SQEK).

Belongs to the MraZ family. Forms oligomers.

Its subcellular location is the cytoplasm. It localises to the nucleoid. In Natranaerobius thermophilus (strain ATCC BAA-1301 / DSM 18059 / JW/NM-WN-LF), this protein is Transcriptional regulator MraZ.